Consider the following 215-residue polypeptide: MKAFTQHTGLVCPLDRANVDTDQIIPKQFLKSIKRTGFGPNLFDEWRYLDVGQPNQDNSKRPINKDFVLNFPRYQGASVLLARENFGCGSSREHAPWALDEYGFRTVIAPSFADIFFNNSFKNGLLPIVLKDEEVDALFEQAEATEGYQLTVDLDAQTVTRPDGVQYSFEVDAFRKHCLLNGLDDIGLTLQDQDAIRAFEAKHQQSSPWLFGAIK.

It belongs to the LeuD family. LeuD type 1 subfamily. As to quaternary structure, heterodimer of LeuC and LeuD.

It catalyses the reaction (2R,3S)-3-isopropylmalate = (2S)-2-isopropylmalate. It functions in the pathway amino-acid biosynthesis; L-leucine biosynthesis; L-leucine from 3-methyl-2-oxobutanoate: step 2/4. Catalyzes the isomerization between 2-isopropylmalate and 3-isopropylmalate, via the formation of 2-isopropylmaleate. This is 3-isopropylmalate dehydratase small subunit from Ectopseudomonas mendocina (strain ymp) (Pseudomonas mendocina).